The sequence spans 197 residues: Negative modulator of initiation of replication (197 aa).

3 interaction with DNA regions span residues 100–101 (AV), 129–133 (RTRVY), and 163–169 (NTNSGRK).

Belongs to the SeqA family. Homodimer. Polymerizes to form helical filaments.

The protein resides in the cytoplasm. Negative regulator of replication initiation, which contributes to regulation of DNA replication and ensures that replication initiation occurs exactly once per chromosome per cell cycle. Binds to pairs of hemimethylated GATC sequences in the oriC region, thus preventing assembly of replication proteins and re-initiation at newly replicated origins. Repression is relieved when the region becomes fully methylated. The chain is Negative modulator of initiation of replication from Haemophilus influenzae (strain ATCC 51907 / DSM 11121 / KW20 / Rd).